A 311-amino-acid polypeptide reads, in one-letter code: Ribosomal RNA small subunit methyltransferase H (311 aa).

Residues 33–35, Asp-53, Phe-80, Asp-101, and Gln-108 contribute to the S-adenosyl-L-methionine site; that span reads AGH.

The protein belongs to the methyltransferase superfamily. RsmH family.

It localises to the cytoplasm. The catalysed reaction is cytidine(1402) in 16S rRNA + S-adenosyl-L-methionine = N(4)-methylcytidine(1402) in 16S rRNA + S-adenosyl-L-homocysteine + H(+). Specifically methylates the N4 position of cytidine in position 1402 (C1402) of 16S rRNA. The chain is Ribosomal RNA small subunit methyltransferase H from Clostridioides difficile (strain 630) (Peptoclostridium difficile).